Reading from the N-terminus, the 257-residue chain is Anamorsin homolog (257 aa).

Positions 1 to 132 (MSVLALDVAR…ARGTAFALKS (132 aa)) are N-terminal SAM-like domain. Residues 133–171 (RAVRVNATAADAADAWGASAAADDDELIDESALLTELDV) form a linker region. [2Fe-2S] cluster-binding residues include cysteine 181, cysteine 190, cysteine 193, and cysteine 195. The segment at 181 to 195 (CDVGAGKKACKNCTC) is fe-S binding site A. Cysteine 219, cysteine 222, cysteine 230, and cysteine 233 together coordinate [4Fe-4S] cluster. Short sequence motifs (cx2C motif) lie at residues 219–222 (CGNC) and 230–233 (CAGC). The fe-S binding site B stretch occupies residues 219-233 (CGNCALGDAFRCAGC).

Belongs to the anamorsin family. In terms of assembly, monomer. [2Fe-2S] cluster is required as a cofactor. It depends on [4Fe-4S] cluster as a cofactor.

The protein localises to the cytoplasm. It localises to the mitochondrion intermembrane space. Component of the cytosolic iron-sulfur (Fe-S) protein assembly (CIA) machinery. Required for the maturation of extramitochondrial Fe-S proteins. Part of an electron transfer chain functioning in an early step of cytosolic Fe-S biogenesis, facilitating the de novo assembly of a [4Fe-4S] cluster on the cytosolic Fe-S scaffold complex. Electrons are transferred from NADPH via a FAD- and FMN-containing diflavin oxidoreductase. Together with the diflavin oxidoreductase, also required for the assembly of the diferric tyrosyl radical cofactor of ribonucleotide reductase (RNR), probably by providing electrons for reduction during radical cofactor maturation in the catalytic small subunit. The polypeptide is Anamorsin homolog (Ostreococcus lucimarinus (strain CCE9901)).